Consider the following 256-residue polypeptide: MKLYKYQGTGNDFIMIDNRLQIFPKQNTALIQKLCDRRFGIGADGLILLENDQSTDFKMVYYNSDGNQSTMCGNGGRCLVAFAKKLNIIKNKTTFIAIDGLHHATINENDIISLQMKNVEEVNIHDNYVFLNTGSPHHVQFADNLSNFDVKNEGAKIRYSDLYGQAGSNINFVHQTSPTQFSIRTYERGVEDETLSCGTGATATAIAMKATGKTNSNNITINVQGGKLEVSFNQENSIFTNIFLKGPAEFVFETTI.

The substrate site is built by N11 and N63. Catalysis depends on C72, which acts as the Proton donor. Substrate contacts are provided by residues 73 to 74 (GN), N169, and 187 to 188 (ER). C197 acts as the Proton acceptor in catalysis. Position 198–199 (198–199 (GT)) interacts with substrate.

It belongs to the diaminopimelate epimerase family. As to quaternary structure, homodimer.

It localises to the cytoplasm. The catalysed reaction is (2S,6S)-2,6-diaminopimelate = meso-2,6-diaminopimelate. It functions in the pathway amino-acid biosynthesis; L-lysine biosynthesis via DAP pathway; DL-2,6-diaminopimelate from LL-2,6-diaminopimelate: step 1/1. Its function is as follows. Catalyzes the stereoinversion of LL-2,6-diaminopimelate (L,L-DAP) to meso-diaminopimelate (meso-DAP), a precursor of L-lysine and an essential component of the bacterial peptidoglycan. This is Diaminopimelate epimerase from Flavobacterium psychrophilum (strain ATCC 49511 / DSM 21280 / CIP 103535 / JIP02/86).